Reading from the N-terminus, the 393-residue chain is Ethanol acetyltransferase 1 (393 aa).

The transit peptide at M1–V25 directs the protein to the mitochondrion. In terms of domain architecture, AB hydrolase-1 spans P49–E151. Active-site charge relay system residues include S122, D146, and H296. A compositionally biased stretch (basic and acidic residues) spans A343–K354. The tract at residues A343–A393 is disordered. Residues V355–T375 are compositionally biased toward polar residues. Residues D379–A393 are compositionally biased toward basic and acidic residues.

It belongs to the AB hydrolase superfamily.

It is found in the mitochondrion. The catalysed reaction is ethanol + acetyl-CoA = ethyl acetate + CoA. The enzyme catalyses acetyl-CoA + H2O = acetate + CoA + H(+). It catalyses the reaction ethyl acetate + H2O = ethanol + acetate + H(+). In terms of biological role, alcohol acetyltransferase that catalyzes the synthesis of ethyl acetate from ethanol and acetyl-CoA. Can also function as a thioesterase by hydrolyzing acetyl-CoA in the absence of ethanol, as well as esterase hydrolyzing ethyl acetate. The protein is Ethanol acetyltransferase 1 (EAT1) of Wickerhamomyces ciferrii (strain ATCC 14091 / BCRC 22168 / CBS 111 / JCM 3599 / NBRC 0793 / NRRL Y-1031 F-60-10) (Yeast).